A 92-amino-acid polypeptide reads, in one-letter code: Small ribosomal subunit protein uS17 (92 aa).

Belongs to the universal ribosomal protein uS17 family. As to quaternary structure, part of the 30S ribosomal subunit.

In terms of biological role, one of the primary rRNA binding proteins, it binds specifically to the 5'-end of 16S ribosomal RNA. This Corynebacterium urealyticum (strain ATCC 43042 / DSM 7109) protein is Small ribosomal subunit protein uS17.